The primary structure comprises 365 residues: Deoxyguanosinetriphosphate triphosphohydrolase-like protein (365 aa).

One can recognise an HD domain in the interval 52-187 (RLTHSIEVSQ…VDHADEIAYV (136 aa)).

Belongs to the dGTPase family. Type 2 subfamily.

The polypeptide is Deoxyguanosinetriphosphate triphosphohydrolase-like protein (Wolinella succinogenes (strain ATCC 29543 / DSM 1740 / CCUG 13145 / JCM 31913 / LMG 7466 / NCTC 11488 / FDC 602W) (Vibrio succinogenes)).